We begin with the raw amino-acid sequence, 382 residues long: tRNA (guanine(26)-N(2))-dimethyltransferase (382 aa).

One can recognise a Trm1 methyltransferase domain in the interval 4–373 (VEIIEGKARI…KNLDEIKECI (370 aa)). S-adenosyl-L-methionine contacts are provided by Arg-44, Arg-69, and Asp-87. The Zn(2+) site is built by Cys-246, Cys-249, Cys-263, and Cys-266.

It belongs to the class I-like SAM-binding methyltransferase superfamily. Trm1 family.

The catalysed reaction is guanosine(26) in tRNA + 2 S-adenosyl-L-methionine = N(2)-dimethylguanosine(26) in tRNA + 2 S-adenosyl-L-homocysteine + 2 H(+). In terms of biological role, dimethylates a single guanine residue at position 26 of a number of tRNAs using S-adenosyl-L-methionine as donor of the methyl groups. The chain is tRNA (guanine(26)-N(2))-dimethyltransferase from Sulfolobus acidocaldarius (strain ATCC 33909 / DSM 639 / JCM 8929 / NBRC 15157 / NCIMB 11770).